The sequence spans 122 residues: Ig heavy chain V region M511 (122 aa).

The region spanning 1 to 114 (EVKLVESGGG…SYWYFDVWGA (114 aa)) is the Ig-like domain.

This Mus musculus (Mouse) protein is Ig heavy chain V region M511.